A 225-amino-acid polypeptide reads, in one-letter code: UPF0758 protein BcerKBAB4_4299 (225 aa).

One can recognise an MPN domain in the interval 103 to 225 (SIRSPEDCAS…FVSLKEKGHI (123 aa)). Residues His-174, His-176, and Asp-187 each coordinate Zn(2+). A JAMM motif motif is present at residues 174–187 (HNHPSGDPAPSRED).

Belongs to the UPF0758 family.

The sequence is that of UPF0758 protein BcerKBAB4_4299 from Bacillus mycoides (strain KBAB4) (Bacillus weihenstephanensis).